The following is a 99-amino-acid chain: Integration host factor subunit alpha (99 aa).

It belongs to the bacterial histone-like protein family. In terms of assembly, heterodimer of an alpha and a beta chain.

Functionally, this protein is one of the two subunits of integration host factor, a specific DNA-binding protein that functions in genetic recombination as well as in transcriptional and translational control. This chain is Integration host factor subunit alpha (ihfA), found in Xanthomonas axonopodis pv. citri (strain 306).